A 450-amino-acid chain; its full sequence is Homogentisate 1,2-dioxygenase (450 aa).

The active-site Proton acceptor is His-304. Residues His-347 and Glu-353 each coordinate Fe cation. Homogentisate is bound by residues Tyr-362 and His-383. Position 383 (His-383) interacts with Fe cation.

The protein belongs to the homogentisate dioxygenase family. In terms of assembly, hexamer; dimer of trimers. Fe cation serves as cofactor.

The enzyme catalyses homogentisate + O2 = 4-maleylacetoacetate + H(+). It participates in amino-acid degradation; L-phenylalanine degradation; acetoacetate and fumarate from L-phenylalanine: step 4/6. Its function is as follows. Involved in the catabolism of homogentisate (2,5-dihydroxyphenylacetate or 2,5-OH-PhAc), a central intermediate in the degradation of phenylalanine and tyrosine. Catalyzes the oxidative ring cleavage of the aromatic ring of homogentisate to yield maleylacetoacetate. The polypeptide is Homogentisate 1,2-dioxygenase (Burkholderia thailandensis (strain ATCC 700388 / DSM 13276 / CCUG 48851 / CIP 106301 / E264)).